The primary structure comprises 720 residues: Fatty acid CoA ligase Acsl3 (720 aa).

Residues 21–41 (ILLYFIHFLISLYTILTYIPF) form a helical; Signal-anchor for type III membrane protein membrane-spanning segment. Residues 42-720 (YFFSESRQEK…ADIERMYGRK (679 aa)) lie on the Cytoplasmic side of the membrane. Ser-683 carries the post-translational modification Phosphoserine.

This sequence belongs to the ATP-dependent AMP-binding enzyme family. Mg(2+) serves as cofactor.

It localises to the mitochondrion outer membrane. The protein resides in the peroxisome membrane. The protein localises to the microsome membrane. It is found in the endoplasmic reticulum membrane. The catalysed reaction is a long-chain fatty acid + ATP + CoA = a long-chain fatty acyl-CoA + AMP + diphosphate. The enzyme catalyses (5Z,8Z,11Z,14Z)-eicosatetraenoate + ATP + CoA = (5Z,8Z,11Z,14Z)-eicosatetraenoyl-CoA + AMP + diphosphate. It catalyses the reaction (E)-hexadec-2-enoate + ATP + CoA = (2E)-hexadecenoyl-CoA + AMP + diphosphate. It carries out the reaction 15-hydroxy-(5Z,8Z,11Z,13E)-eicosatetraenoate + ATP + CoA = 15-hydroxy-(5Z,8Z,11Z,13E)-eicosatetraenoyl-CoA + AMP + diphosphate. The catalysed reaction is 12-hydroxy-(5Z,8Z,10E,14Z)-eicosatetraenoate + ATP + CoA = 12-hydroxy-(5Z,8Z,10E,14Z)-eicosatetraenoyl-CoA + AMP + diphosphate. The enzyme catalyses 5-hydroxy-(6E,8Z,11Z,14Z)-eicosatetraenoate + ATP + CoA = 5-hydroxy-(6E,8Z,11Z,14Z)-eicosatetraenoyl-CoA + AMP + diphosphate. It catalyses the reaction 14,15-epoxy-(5Z,8Z,11Z)-eicosatrienoate + ATP + CoA = 14,15-epoxy-(5Z,8Z,11Z)-eicosatrienoyl-CoA + AMP + diphosphate. It carries out the reaction 11,12-epoxy-(5Z,8Z,14Z)-eicosatrienoate + ATP + CoA = 11,12-epoxy-(5Z,8Z,14Z)-eicosatrienoyl-CoA + AMP + diphosphate. The catalysed reaction is a medium-chain fatty acid + ATP + CoA = a medium-chain fatty acyl-CoA + AMP + diphosphate. The enzyme catalyses hexadecanoate + ATP + CoA = hexadecanoyl-CoA + AMP + diphosphate. It catalyses the reaction tetradecanoate + ATP + CoA = tetradecanoyl-CoA + AMP + diphosphate. It carries out the reaction dodecanoate + ATP + CoA = dodecanoyl-CoA + AMP + diphosphate. The catalysed reaction is octadecanoate + ATP + CoA = octadecanoyl-CoA + AMP + diphosphate. The enzyme catalyses eicosanoate + ATP + CoA = eicosanoyl-CoA + AMP + diphosphate. It catalyses the reaction (9Z)-octadecenoate + ATP + CoA = (9Z)-octadecenoyl-CoA + AMP + diphosphate. It carries out the reaction (9Z)-hexadecenoate + ATP + CoA = (9Z)-hexadecenoyl-CoA + AMP + diphosphate. The catalysed reaction is (9Z,12Z)-octadecadienoate + ATP + CoA = (9Z,12Z)-octadecadienoyl-CoA + AMP + diphosphate. The enzyme catalyses (9Z,12Z,15Z)-octadecatrienoate + ATP + CoA = (9Z,12Z,15Z)-octadecatrienoyl-CoA + AMP + diphosphate. It catalyses the reaction (4Z,7Z,10Z,13Z,16Z,19Z)-docosahexaenoate + ATP + CoA = (4Z,7Z,10Z,13Z,16Z,19Z)-docosahexaenoyl-CoA + AMP + diphosphate. It carries out the reaction (5Z,8Z,11Z,14Z,17Z)-eicosapentaenoate + ATP + CoA = (5Z,8Z,11Z,14Z,17Z)-eicosapentaenoyl-CoA + AMP + diphosphate. The catalysed reaction is a fatty acid + ATP + CoA = a fatty acyl-CoA + AMP + diphosphate. Functionally, acyl-CoA synthetases (ACSL) activates long-chain fatty acids for both synthesis of cellular lipids, and degradation via beta-oxidation. Required for the incorporation of fatty acids into phosphatidylcholine, the major phospholipid located on the surface of VLDL (very low density lipoproteins). Has mainly an anabolic role in energy metabolism. Mediates hepatic lipogenesis. Preferentially uses myristate, laurate, arachidonate and eicosapentaenoate as substrates. Both isoforms exhibit the same level of activity. This is Fatty acid CoA ligase Acsl3 from Homo sapiens (Human).